We begin with the raw amino-acid sequence, 198 residues long: Na(+)-translocating NADH-quinone reductase subunit E (198 aa).

The next 6 helical transmembrane spans lie at 11–31 (SIFI…FLAV), 35–55 (VSTA…AVPA), 77–97 (FLNF…LEMI), 110–130 (GIFL…SFMV), 140–160 (VVYG…LAGI), and 176–196 (LGIT…FSGI).

It belongs to the NqrDE/RnfAE family. Composed of six subunits; NqrA, NqrB, NqrC, NqrD, NqrE and NqrF.

It is found in the cell inner membrane. The catalysed reaction is a ubiquinone + n Na(+)(in) + NADH + H(+) = a ubiquinol + n Na(+)(out) + NAD(+). Functionally, NQR complex catalyzes the reduction of ubiquinone-1 to ubiquinol by two successive reactions, coupled with the transport of Na(+) ions from the cytoplasm to the periplasm. NqrA to NqrE are probably involved in the second step, the conversion of ubisemiquinone to ubiquinol. This is Na(+)-translocating NADH-quinone reductase subunit E from Glaesserella parasuis serovar 5 (strain SH0165) (Haemophilus parasuis).